Consider the following 422-residue polypeptide: GPI mannosyltransferase 1 (422 aa).

Transmembrane regions (helical) follow at residues 10–30, 82–102, 162–182, 216–236, 282–302, 327–347, 352–372, and 385–405; these read TTPL…YGIY, FPAF…WLIL, IILG…PAIV, LKFG…MFAI, IESF…PLAL, SQYF…SSFL, LGIF…QQGY, and GLWL…GVII.

This sequence belongs to the PIGM family.

It localises to the endoplasmic reticulum membrane. Its pathway is glycolipid biosynthesis; glycosylphosphatidylinositol-anchor biosynthesis. In terms of biological role, mannosyltransferase involved in glycosylphosphatidylinositol-anchor biosynthesis. Transfers the first alpha-1,4-mannose to GlcN-acyl-PI during GPI precursor assembly. Required for cell wall integrity. The chain is GPI mannosyltransferase 1 (GPI14) from Gibberella zeae (strain ATCC MYA-4620 / CBS 123657 / FGSC 9075 / NRRL 31084 / PH-1) (Wheat head blight fungus).